The primary structure comprises 181 residues: Adenine phosphoribosyltransferase (181 aa).

The protein belongs to the purine/pyrimidine phosphoribosyltransferase family. As to quaternary structure, homodimer.

It localises to the cytoplasm. The enzyme catalyses AMP + diphosphate = 5-phospho-alpha-D-ribose 1-diphosphate + adenine. Its pathway is purine metabolism; AMP biosynthesis via salvage pathway; AMP from adenine: step 1/1. In terms of biological role, catalyzes a salvage reaction resulting in the formation of AMP, that is energically less costly than de novo synthesis. This chain is Adenine phosphoribosyltransferase, found in Rhodopseudomonas palustris (strain BisB5).